The chain runs to 637 residues: Chaperone protein HtpG (637 aa).

The a; substrate-binding stretch occupies residues 1 to 335; that stretch reads MQGTVNSERL…SSDLPLNISR (335 aa). Residues 336–559 form a b region; the sequence is ETLQNNKIIE…DGSMDIRMER (224 aa). A c region spans residues 560–637; it reads FLREQKQLNY…RMNSVLSQIN (78 aa).

It belongs to the heat shock protein 90 family. Homodimer.

The protein resides in the cytoplasm. Molecular chaperone. Has ATPase activity. The polypeptide is Chaperone protein HtpG (Ehrlichia ruminantium (strain Gardel)).